Consider the following 138-residue polypeptide: Basic phospholipase A2 Cll-N6 (138 aa).

The first 16 residues, Met1–Gly16, serve as a signal peptide directing secretion. 7 disulfide bridges follow: Cys42–Cys131, Cys44–Cys60, Cys59–Cys111, Cys65–Cys138, Cys66–Cys104, Cys73–Cys97, and Cys91–Cys102. Tyr43, Gly45, and Gly47 together coordinate Ca(2+). His63 is an active-site residue. Asp64 contributes to the Ca(2+) binding site. Asp105 is a catalytic residue.

As to quaternary structure, monomer. Requires Ca(2+) as cofactor. In terms of tissue distribution, expressed by the venom gland.

The protein localises to the secreted. The enzyme catalyses a 1,2-diacyl-sn-glycero-3-phosphocholine + H2O = a 1-acyl-sn-glycero-3-phosphocholine + a fatty acid + H(+). Its function is as follows. Snake venom phospholipase A2 (PLA2) that shows myotoxic activities. PLA2 catalyzes the calcium-dependent hydrolysis of the 2-acyl groups in 3-sn-phosphoglycerides. This Crotalus lepidus lepidus (Mottled rock rattlesnake) protein is Basic phospholipase A2 Cll-N6.